The sequence spans 229 residues: Allatostatin-A (229 aa).

The N-terminal stretch at 1–18 is a signal peptide; sequence MLSTSLPVCFLVIGAALC. A propeptide spanning residues 19 to 48 is cleaved from the precursor; sequence APERMQNDPDPHDSTAQGSDNHSDHIAPLA. The disordered stretch occupies residues 23–46; it reads MQNDPDPHDSTAQGSDNHSDHIAP. Leu-58 carries the post-translational modification Leucine amide. A propeptide spanning residues 62–80 is cleaved from the precursor; it reads AYSYVSEYKRLPVYNFGLG. Leu-90 is modified (leucine amide). The propeptide occupies 94–130; that stretch reads SVDEDQTNDDQQQIMNNDLDQAALAEFFDQYDDAGYE. A Leucine amide modification is found at Leu-140. Residues 144–152 constitute a propeptide that is removed on maturation; sequence FADDDTSEE. A leucine amide mark is found at Leu-162, Leu-173, Leu-184, Leu-196, and Leu-210. A propeptide spanning residues 214–229 is cleaved from the precursor; the sequence is SADDASTEDSDNYFDV.

The protein belongs to the allatostatin family. In terms of tissue distribution, allatostatin-A-1: Expressed in antennal lobe (AL), corpora cardiaca (CC), corpora allata (CA) and gnathal ganglion (GNG) (at protein level). Expression in AL and GNG detected in most animals, in CC and CA in some animals (at protein level). Allatostatin-A-3: Expressed in antennal lobe (AL), corpora cardiaca (CC), corpora allata (CA) and gnathal ganglion (GNG) (at protein level). Expression in AL detected in all animals, in GNG, CC and CA in most animals (at protein level). Allatostatin-A-4: Expressed in antennal lobe (AL), corpora cardiaca (CC), corpora allata (CA) and gnathal ganglion (GNG) in all animals (at protein level). Allatostatin-A-5: Expressed in antennal lobe (AL), corpora cardiaca (CC), corpora allata (CA) and gnathal ganglion (GNG) in all animals (at protein level). Allatostatin-A-6: Expressed in antennal lobe (AL) and gnathal ganglion (GNG) (at protein level). Expression in AL detected in some animals, in GNG in few animals (at protein level). Not expressed in corpora cardiaca (CC) and corpora allata (CA) (at protein level). Allatostatin-A-7: Expressed in antennal lobe (AL), corpora cardiaca (CC), corpora allata (CA) and gnathal ganglion (GNG) (at protein level). Expression in AL detected in all animals, in GNG, CC and CA in most animals (at protein level). Allatostatin-A-8: Expressed in antennal lobe (AL), corpora cardiaca (CC), corpora allata (CA) and gnathal ganglion (GNG) (at protein level). Expression in AL detected in all animals, in GNG, CC and CA in most animals (at protein level). Allatostatin-A-9: Expressed in antennal lobe (AL), corpora cardiaca (CC), corpora allata (CA) and gnathal ganglion (GNG) (at protein level). Expression in AL detected in all animals, in GNG in most animals and in CC and CA in some animals (at protein level).

Its subcellular location is the secreted. Neuropeptide inhibitors of juvenile hormone synthesis and gut muscle contraction. In Agrotis ipsilon (Black cutworm moth), this protein is Allatostatin-A.